We begin with the raw amino-acid sequence, 508 residues long: Histidine ammonia-lyase (508 aa).

The 5-imidazolinone (Ala-Gly) cross-link spans Ala-139–Gly-141. A 2,3-didehydroalanine (Ser) modification is found at Ser-140.

It belongs to the PAL/histidase family. In terms of processing, contains an active site 4-methylidene-imidazol-5-one (MIO), which is formed autocatalytically by cyclization and dehydration of residues Ala-Ser-Gly.

It is found in the cytoplasm. The enzyme catalyses L-histidine = trans-urocanate + NH4(+). The protein operates within amino-acid degradation; L-histidine degradation into L-glutamate; N-formimidoyl-L-glutamate from L-histidine: step 1/3. This is Histidine ammonia-lyase from Acidiphilium cryptum (strain JF-5).